A 146-amino-acid chain; its full sequence is Vascular endothelial growth factor A (146 aa).

The first 26 residues, methionine 1–alanine 26, serve as a signal peptide directing secretion. Intrachain disulfides connect cysteine 51-cysteine 93, cysteine 82-cysteine 127, and cysteine 86-cysteine 129. Asparagine 100 carries N-linked (GlcNAc...) asparagine glycosylation.

It belongs to the PDGF/VEGF growth factor family. As to quaternary structure, homodimer; disulfide-linked. Also found as heterodimer with PGF. Interacts with NRP1. Interacts with isoform 2 of BSG. Interacts with CD82; this interaction inhibits VEGFA-mediated signaling pathway.

Functionally, growth factor active in angiogenesis, vasculogenesis and endothelial cell growth. Induces endothelial cell proliferation, promotes cell migration, inhibits apoptosis and induces permeabilization of blood vessels. Binds to the FLT1/VEGFR1 and KDR/VEGFR2 receptors, heparan sulfate and heparin. Binding to NRP1 receptor initiates a signaling pathway needed for motor neuron axon guidance and cell body migration, including for the caudal migration of facial motor neurons from rhombomere 4 to rhombomere 6 during embryonic development. Also binds the DEAR/FBXW7-AS1 receptor. The sequence is that of Vascular endothelial growth factor A (VEGFA) from Ovis aries (Sheep).